A 312-amino-acid chain; its full sequence is DNA-directed RNA polymerase subunit alpha (312 aa).

The interval 1–226 is alpha N-terminal domain (alpha-NTD); the sequence is MIEFEKPNIT…EHLDIFVNLT (226 aa). The interval 243–312 is alpha C-terminal domain (alpha-CTD); the sequence is KEKMLEMTIE…DLGLGLRKED (70 aa).

This sequence belongs to the RNA polymerase alpha chain family. As to quaternary structure, homodimer. The RNAP catalytic core consists of 2 alpha, 1 beta, 1 beta' and 1 omega subunit. When a sigma factor is associated with the core the holoenzyme is formed, which can initiate transcription.

It catalyses the reaction RNA(n) + a ribonucleoside 5'-triphosphate = RNA(n+1) + diphosphate. Its function is as follows. DNA-dependent RNA polymerase catalyzes the transcription of DNA into RNA using the four ribonucleoside triphosphates as substrates. This chain is DNA-directed RNA polymerase subunit alpha, found in Lacticaseibacillus casei (strain BL23) (Lactobacillus casei).